The sequence spans 410 residues: Multifunctional CCA protein (410 aa).

ATP-binding residues include Gly8 and Arg11. 2 residues coordinate CTP: Gly8 and Arg11. Mg(2+)-binding residues include Glu21 and Asp23. ATP is bound by residues Arg91, Arg137, and Arg140. Arg91, Arg137, and Arg140 together coordinate CTP. The HD domain occupies 228 to 329; the sequence is TLLHQFLCLK…WKLFKSLDIL (102 aa).

The protein belongs to the tRNA nucleotidyltransferase/poly(A) polymerase family. Bacterial CCA-adding enzyme type 1 subfamily. In terms of assembly, monomer. Can also form homodimers and oligomers. The cofactor is Mg(2+). It depends on Ni(2+) as a cofactor.

It carries out the reaction a tRNA precursor + 2 CTP + ATP = a tRNA with a 3' CCA end + 3 diphosphate. It catalyses the reaction a tRNA with a 3' CCA end + 2 CTP + ATP = a tRNA with a 3' CCACCA end + 3 diphosphate. Functionally, catalyzes the addition and repair of the essential 3'-terminal CCA sequence in tRNAs without using a nucleic acid template. Adds these three nucleotides in the order of C, C, and A to the tRNA nucleotide-73, using CTP and ATP as substrates and producing inorganic pyrophosphate. tRNA 3'-terminal CCA addition is required both for tRNA processing and repair. Also involved in tRNA surveillance by mediating tandem CCA addition to generate a CCACCA at the 3' terminus of unstable tRNAs. While stable tRNAs receive only 3'-terminal CCA, unstable tRNAs are marked with CCACCA and rapidly degraded. The chain is Multifunctional CCA protein from Alcanivorax borkumensis (strain ATCC 700651 / DSM 11573 / NCIMB 13689 / SK2).